A 100-amino-acid chain; its full sequence is Large ribosomal subunit protein eL30 (100 aa).

It belongs to the eukaryotic ribosomal protein eL30 family.

This Aeropyrum pernix (strain ATCC 700893 / DSM 11879 / JCM 9820 / NBRC 100138 / K1) protein is Large ribosomal subunit protein eL30 (rpl30e).